The sequence spans 210 residues: Phosphoenolpyruvate guanylyltransferase (210 aa).

3 residues coordinate phosphoenolpyruvate: threonine 130, glycine 146, and serine 149.

The protein belongs to the CofC family.

It catalyses the reaction phosphoenolpyruvate + GTP + H(+) = enolpyruvoyl-2-diphospho-5'-guanosine + diphosphate. Its pathway is cofactor biosynthesis; coenzyme F420 biosynthesis. Guanylyltransferase that catalyzes the activation of phosphoenolpyruvate (PEP) as enolpyruvoyl-2-diphospho-5'-guanosine, via the condensation of PEP with GTP. It is involved in the biosynthesis of coenzyme F420, a hydride carrier cofactor. The chain is Phosphoenolpyruvate guanylyltransferase from Roseiflexus castenholzii (strain DSM 13941 / HLO8).